The primary structure comprises 525 residues: Peptide chain release factor 3 (525 aa).

Residues 9-276 (AKRRTFAIIS…GFTTYAPEPQ (268 aa)) form the tr-type G domain. GTP-binding positions include 18–25 (SHPDAGKT), 86–90 (DTPGH), and 140–143 (NKFD).

It belongs to the TRAFAC class translation factor GTPase superfamily. Classic translation factor GTPase family. PrfC subfamily.

Its subcellular location is the cytoplasm. In terms of biological role, increases the formation of ribosomal termination complexes and stimulates activities of RF-1 and RF-2. It binds guanine nucleotides and has strong preference for UGA stop codons. It may interact directly with the ribosome. The stimulation of RF-1 and RF-2 is significantly reduced by GTP and GDP, but not by GMP. The protein is Peptide chain release factor 3 of Francisella philomiragia subsp. philomiragia (strain ATCC 25017 / CCUG 19701 / FSC 153 / O#319-036).